Consider the following 187-residue polypeptide: UPF0301 protein KPK_0728 (187 aa).

It belongs to the UPF0301 (AlgH) family.

The sequence is that of UPF0301 protein KPK_0728 from Klebsiella pneumoniae (strain 342).